The following is a 410-amino-acid chain: Mating-type locus allele B4 protein (410 aa).

The variable domain between B alleles stretch occupies residues 1–110; that stretch reads MSSDPKISIT…ANASSPVVGC (110 aa). Residues 107–184 constitute a DNA-binding region (homeobox; TALE-type); that stretch reads VVGCRELSED…NARRRSGWSH (78 aa). The tract at residues 111 to 410 is highly conserved between B alleles; that stretch reads RELSEDLPAY…PFLCLSVAFV (300 aa). Disordered regions lie at residues 202–241, 278–335, and 375–394; these read RAKL…TPAD, TPKP…TPEL, and RGNR…QPDE. Over residues 206–222 the composition is skewed to low complexity; it reads SSSNQSTPPSPTSEYPS. Positions 276–308 match the Nuclear localization signal motif; sequence KKTPKPGMPRPVTTVAKRQPARKTKPAAKPKSR. Residues 294 to 307 are compositionally biased toward basic residues; that stretch reads QPARKTKPAAKPKS. Positions 312–335 are enriched in polar residues; that stretch reads PRASTTPSIDSTLDSSKLESTPEL. Positions 333–410 are not essential for B4 function; sequence PELSMCSTAD…PFLCLSVAFV (78 aa). Residues 375–388 are compositionally biased toward basic residues; that stretch reads RGNRKVKALPKRAG.

This sequence belongs to the TALE/M-ATYP homeobox family.

It localises to the nucleus. The B locus has at least 25 alleles, and any combination of two different B alleles yields a multimeric regulatory protein, that activates genes responsible for the pathogenicity and for the sexual development of the fungus within the corn plant. The protein is Mating-type locus allele B4 protein of Mycosarcoma maydis (Corn smut fungus).